The primary structure comprises 450 residues: Putative MYST-like histone acetyltransferase 1 (450 aa).

One can recognise a Tudor-knot domain in the interval 63 to 122 (LEVGTRVMCRWRDQKLHPVKVIERRKSSTSSSPADYEYYVHYTEFNRRLDEWVKLEQLDL). The region spanning 174-445 (TKVKNIAKIE…VDVSKLIWTP (272 aa)) is the MYST-type HAT domain. A C2HC MYST-type zinc finger spans residues 207 to 232 (LFFCEFCLNFMKRKEQLQRHMKKCDL). Residue K274 is modified to N6-acetyllysine; by autocatalysis. Residues 317–319 (ILT) and 324–330 (QRKGYGK) contribute to the acetyl-CoA site. E350 acts as the Proton donor/acceptor in catalysis. S354 contacts acetyl-CoA.

The protein belongs to the MYST (SAS/MOZ) family. Post-translationally, autoacetylation at Lys-274 is required for proper function.

The protein resides in the nucleus. The catalysed reaction is L-lysyl-[protein] + acetyl-CoA = N(6)-acetyl-L-lysyl-[protein] + CoA + H(+). Functionally, histone acetyltransferase which may be involved in transcriptional activation. This is Putative MYST-like histone acetyltransferase 1 from Oryza sativa subsp. japonica (Rice).